We begin with the raw amino-acid sequence, 718 residues long: Protein Hook homolog 3 (718 aa).

An N-acetylmethionine modification is found at Met-1. Residues 1-164 (MFSVESLERA…QELMSKESPV (164 aa)) are sufficient for interaction with microtubules. 2 positions are modified to phosphoserine: Ser-3 and Ser-6. The Calponin-homology (CH) domain occupies 10–126 (AELCESLLTW…RMLQLILGCA (117 aa)). 2 coiled-coil regions span residues 167 to 433 (GNDA…VQAQ) and 462 to 667 (EIRE…YIVS). Ser-238 is subject to Phosphoserine. The interval 553–718 (EKLHEANNEL…PGHVQPATAR (166 aa)) is required for association with Golgi. The segment at 556 to 718 (HEANNELQKK…PGHVQPATAR (163 aa)) is required for interaction with MSR1. The segment at 682 to 718 (EDRLASTGSGQSFLARQRQATSSRRSYPGHVQPATAR) is disordered. Ser-693 and Ser-707 each carry phosphoserine. Residues 696–707 (ARQRQATSSRRS) show a composition bias toward low complexity.

Belongs to the hook family. Self-associates. Component of the FTS/Hook/FHIP complex (FHF complex), composed of AKTIP/FTS, FHIP1B, and one or more members of the Hook family of proteins HOOK1, HOOK2, and HOOK3. May interact directly with AKTIP/FTS, HOOK1 and HOOK2. Associates with several subunits of the homotypic vesicular sorting complex (the HOPS complex) including VPS16 and VPS41; these interactions may be indirect. Interacts with MSR1, and this association is stimulated by ligand binding to MSR1. Interacts with microtubules. Part of a tripartite complex with dynein and dynactin, acts an adapter linking the dynein motor complex and dynactin. Interacts with dynein intermediate chain and dynactin (DCTN1). Interacts with CCDC181. Interacts with LRGUK. In terms of assembly, (Microbial infection) Interacts with Salmonella typhimurium spiC.

The protein localises to the cytoplasm. It localises to the cytoskeleton. The protein resides in the golgi apparatus. Its function is as follows. Acts as an adapter protein linking the dynein motor complex to various cargos and converts dynein from a non-processive to a highly processive motor in the presence of dynactin. Facilitates the interaction between dynein and dynactin and activates dynein processivity (the ability to move along a microtubule for a long distance without falling off the track). Predominantly recruits 2 dyneins, which increases both the force and speed of the microtubule motor. Component of the FTS/Hook/FHIP complex (FHF complex). The FHF complex may function to promote vesicle trafficking and/or fusion via the homotypic vesicular protein sorting complex (the HOPS complex). May regulate clearance of endocytosed receptors such as MSR1. Participates in defining the architecture and localization of the Golgi complex. FHF complex promotes the distribution of AP-4 complex to the perinuclear area of the cell. In terms of biological role, (Microbial infection) May serve as a target for the spiC protein from Salmonella typhimurium, which inactivates it, leading to a strong alteration in cellular trafficking. The chain is Protein Hook homolog 3 from Homo sapiens (Human).